Reading from the N-terminus, the 1153-residue chain is uncharacterized protein (1153 aa).

Positions M1–G18 are cleaved as a signal peptide. C19 carries the N-palmitoyl cysteine lipid modification. Residue C19 is the site of S-diacylglycerol cysteine attachment. 4 helical membrane-spanning segments follow: residues V289–I309, L393–F413, A422–F442, and I457–I477.

Belongs to the TrbL/VirB6 family.

The protein localises to the cell membrane. This is an uncharacterized protein from Rickettsia conorii (strain ATCC VR-613 / Malish 7).